Reading from the N-terminus, the 259-residue chain is Ribonuclease PH (259 aa).

Residues Arg-88 and 126–128 (GTR) each bind phosphate.

It belongs to the RNase PH family. Homohexameric ring arranged as a trimer of dimers.

It carries out the reaction tRNA(n+1) + phosphate = tRNA(n) + a ribonucleoside 5'-diphosphate. In terms of biological role, phosphorolytic 3'-5' exoribonuclease that plays an important role in tRNA 3'-end maturation. Removes nucleotide residues following the 3'-CCA terminus of tRNAs; can also add nucleotides to the ends of RNA molecules by using nucleoside diphosphates as substrates, but this may not be physiologically important. Probably plays a role in initiation of 16S rRNA degradation (leading to ribosome degradation) during starvation. In Mycobacterium bovis (strain ATCC BAA-935 / AF2122/97), this protein is Ribonuclease PH.